A 748-amino-acid chain; its full sequence is Catalase-peroxidase (748 aa).

The span at 1–14 shows a compositional bias: basic and acidic residues; it reads MTDTSDARPPHSDA. The disordered stretch occupies residues 1–40; the sequence is MTDTSDARPPHSDAKTASNSESENPAIDSPEPKSHAPLTN. Positions 112 to 239 form a cross-link, tryptophyl-tyrosyl-methioninium (Trp-Tyr) (with M-265); sequence WHAAGTYRIF…FGATTMGLIY (128 aa). H113 (proton acceptor) is an active-site residue. The segment at residues 239-265 is a cross-link (tryptophyl-tyrosyl-methioninium (Tyr-Met) (with W-112)); that stretch reads YVNPEGPEGKPDPLAAAHDIRETFGRM. H280 contributes to the heme b binding site.

Belongs to the peroxidase family. Peroxidase/catalase subfamily. Homodimer or homotetramer. The cofactor is heme b. Post-translationally, formation of the three residue Trp-Tyr-Met cross-link is important for the catalase, but not the peroxidase activity of the enzyme.

The enzyme catalyses H2O2 + AH2 = A + 2 H2O. It carries out the reaction 2 H2O2 = O2 + 2 H2O. Functionally, bifunctional enzyme with both catalase and broad-spectrum peroxidase activity. In Mycolicibacterium gilvum (strain PYR-GCK) (Mycobacterium gilvum (strain PYR-GCK)), this protein is Catalase-peroxidase.